The sequence spans 323 residues: GILT-like protein C02D5.2 (323 aa).

Residues 13–32 (LICRPILTFSSLHILTAFLI) form a helical membrane-spanning segment. An N-linked (GlcNAc...) asparagine glycan is attached at asparagine 35. 2 helical membrane-spanning segments follow: residues 37–59 (SYIN…HRFL) and 87–104 (YIYG…YRSL). N-linked (GlcNAc...) asparagine glycosylation is present at asparagine 289.

Belongs to the GILT family.

The protein resides in the membrane. The chain is GILT-like protein C02D5.2 from Caenorhabditis elegans.